A 354-amino-acid polypeptide reads, in one-letter code: tRNA-specific 2-thiouridylase MnmA (354 aa).

ATP-binding positions include 6–13 (LLSGGVDS) and Leu33. Cys100 acts as the Nucleophile in catalysis. A disulfide bridge connects residues Cys100 and Cys195. Gly123 provides a ligand contact to ATP. Residues 145–147 (KDQ) are interaction with tRNA. Catalysis depends on Cys195, which acts as the Cysteine persulfide intermediate.

The protein belongs to the MnmA/TRMU family.

It localises to the cytoplasm. It catalyses the reaction S-sulfanyl-L-cysteinyl-[protein] + uridine(34) in tRNA + AH2 + ATP = 2-thiouridine(34) in tRNA + L-cysteinyl-[protein] + A + AMP + diphosphate + H(+). Catalyzes the 2-thiolation of uridine at the wobble position (U34) of tRNA, leading to the formation of s(2)U34. The sequence is that of tRNA-specific 2-thiouridylase MnmA from Borrelia turicatae (strain 91E135).